Here is a 77-residue protein sequence, read N- to C-terminus: Large ribosomal subunit protein uL29 (77 aa).

It belongs to the universal ribosomal protein uL29 family.

This chain is Large ribosomal subunit protein uL29, found in Mycolicibacterium gilvum (strain PYR-GCK) (Mycobacterium gilvum (strain PYR-GCK)).